The sequence spans 175 residues: Translation initiation factor IF-3 (175 aa).

The protein belongs to the IF-3 family. Monomer.

The protein localises to the cytoplasm. Functionally, IF-3 binds to the 30S ribosomal subunit and shifts the equilibrium between 70S ribosomes and their 50S and 30S subunits in favor of the free subunits, thus enhancing the availability of 30S subunits on which protein synthesis initiation begins. The chain is Translation initiation factor IF-3 from Aquifex aeolicus (strain VF5).